We begin with the raw amino-acid sequence, 383 residues long: Chaperone protein DnaJ (383 aa).

One can recognise a J domain in the interval 4–68; it reads DLYETLNVSR…DQRARYDRFG (65 aa). The CR-type zinc finger occupies 139–221; sequence GGEKEITINH…CSGRGRNQKQ (83 aa). Residues Cys152, Cys155, Cys169, Cys172, Cys195, Cys198, Cys209, and Cys212 each coordinate Zn(2+). CXXCXGXG motif repeat units lie at residues 152–159, 169–176, 195–202, and 209–216; these read CETCRGSG, CRNCGGQG, CPNCQGTG, and CPTCSGRG.

The protein belongs to the DnaJ family. As to quaternary structure, homodimer. It depends on Zn(2+) as a cofactor.

Its subcellular location is the cytoplasm. Its function is as follows. Participates actively in the response to hyperosmotic and heat shock by preventing the aggregation of stress-denatured proteins and by disaggregating proteins, also in an autonomous, DnaK-independent fashion. Unfolded proteins bind initially to DnaJ; upon interaction with the DnaJ-bound protein, DnaK hydrolyzes its bound ATP, resulting in the formation of a stable complex. GrpE releases ADP from DnaK; ATP binding to DnaK triggers the release of the substrate protein, thus completing the reaction cycle. Several rounds of ATP-dependent interactions between DnaJ, DnaK and GrpE are required for fully efficient folding. Also involved, together with DnaK and GrpE, in the DNA replication of plasmids through activation of initiation proteins. This is Chaperone protein DnaJ from Gloeobacter violaceus (strain ATCC 29082 / PCC 7421).